The sequence spans 339 residues: WAT1-related protein At5g40210 (339 aa).

Helical transmembrane passes span 11 to 31 (GWIL…NTLV), 42 to 62 (FVVL…LTFF), 74 to 94 (FSIL…QILG), 104 to 124 (TLSS…AVVF), 140 to 160 (VLGT…HGPM), 168 to 188 (WIIG…SYLV), 200 to 220 (VVVT…VSLL), 233 to 253 (FDIT…YYVI), 266 to 286 (LSMF…IFLG), and 289 to 309 (LYLG…MVLW). In terms of domain architecture, EamA spans 29–154 (TLVKAATSKG…LSIIGALVVT (126 aa)).

The protein belongs to the drug/metabolite transporter (DMT) superfamily. Plant drug/metabolite exporter (P-DME) (TC 2.A.7.4) family.

The protein resides in the membrane. The protein is WAT1-related protein At5g40210 of Arabidopsis thaliana (Mouse-ear cress).